A 334-amino-acid chain; its full sequence is MAGIASTVAVMGAGAWGTALAKVLADAGGEVTLWARRAEVADQINTTRYNPDYLPGALLPPSIHATADAEEALGGASTVLLGVPAQTMRANLERWAPLLPEGATLVSLAKGIELGTLMRMSQVIISVTGAEPPQVAVISGPNLASEIAECQPAATVVACSDSGRAVALQRALNSGYFRPYTNADVVGTEIGGACKNIIALACGMAVGIGLGENTAAAIITRGLAEIIRLGTALGANGATLAGLAGVGDLVATCTSPRSRNRSFGERLGRGETLQSAGKACHVVEGVTSCESVLALASSYDVEMPLTDAVHRVCHKGLSVDEAITLLLGRRTKPE.

Residues Trp16, Arg36, Arg37, and Lys110 each contribute to the NADPH site. 2 residues coordinate sn-glycerol 3-phosphate: Lys110 and Gly140. NADPH is bound at residue Ala144. Sn-glycerol 3-phosphate contacts are provided by Lys195, Asp248, Ser258, Arg259, and Asn260. The active-site Proton acceptor is Lys195. Residue Arg259 participates in NADPH binding. Residues Val282 and Glu284 each coordinate NADPH.

The protein belongs to the NAD-dependent glycerol-3-phosphate dehydrogenase family.

The protein resides in the cytoplasm. The catalysed reaction is sn-glycerol 3-phosphate + NAD(+) = dihydroxyacetone phosphate + NADH + H(+). The enzyme catalyses sn-glycerol 3-phosphate + NADP(+) = dihydroxyacetone phosphate + NADPH + H(+). The protein operates within membrane lipid metabolism; glycerophospholipid metabolism. Functionally, catalyzes the reduction of the glycolytic intermediate dihydroxyacetone phosphate (DHAP) to sn-glycerol 3-phosphate (G3P), the key precursor for phospholipid synthesis. The sequence is that of Glycerol-3-phosphate dehydrogenase [NAD(P)+] 2 from Mycobacterium tuberculosis (strain ATCC 25618 / H37Rv).